A 344-amino-acid chain; its full sequence is Follistatin (344 aa).

The signal sequence occupies residues Met1–Ala29. One can recognise a TB domain in the interval Gly30–Gly103. 18 disulfides stabilise this stretch: Cys32–Cys55, Cys42–Cys88, Cys56–Cys91, Cys95–Cys106, Cys100–Cys116, Cys118–Cys150, Cys122–Cys143, Cys132–Cys164, Cys168–Cys179, Cys173–Cys189, Cys192–Cys225, Cys196–Cys218, Cys207–Cys239, Cys245–Cys256, Cys250–Cys267, Cys270–Cys302, Cys274–Cys295, and Cys284–Cys316. One can recognise a Follistatin-like 1 domain in the interval Thr94–Val117. In terms of domain architecture, Kazal-like 1 spans Asn112–Lys166. An N-linked (GlcNAc...) asparagine glycan is attached at Asn124. A Follistatin-like 2 domain is found at Thr167–Val190. Residues Asn186–Lys241 enclose the Kazal-like 2 domain. The region spanning Ser244–Ser268 is the Follistatin-like 3 domain. The 55-residue stretch at Arg264–Ser318 folds into the Kazal-like 3 domain. N-linked (GlcNAc...) asparagine glycosylation is present at Asn288. A disordered region spans residues Ser315–Trp344. Positions Glu321–Asp333 are enriched in acidic residues.

As to quaternary structure, interacts with GDF11. Interacts with activin A/INHBA. Interacts with myostatin/MSTN.

It is found in the secreted. It localises to the nucleus. Its subcellular location is the nucleolus. In terms of biological role, multifunctional regulatory protein whose primary function is to antagonize members of the transforming growth factor beta (TGF-beta) superfamily including activin, myostatin, GDF11 or bone morphogenetic proteins (BMPs). Mechanistically, binds to these ligands in the extracellular space, blocking their type II receptor-binding site to inhibit downstream signaling. Plays an essential role in muscle fiber formation and growth both by preventing the repressive effects of myostatin and through SMAD3/AKT/mTOR signaling independently of myostatin. Also promotes neural differentiation by antagonizing the action BMP4. Acts as a specific inhibitor of the biosynthesis and secretion of pituitary follicle stimulating hormone (FSH) by sequestering activin A/INHBA. On the other hand, translocates into the nucleus where it down-regulates rRNA synthesis and ribosome biogenesis to maintain cellular energy homeostasis by binding to rDNA. This is Follistatin from Mus musculus (Mouse).